The following is a 641-amino-acid chain: Protein TIC 62, chloroplastic (641 aa).

The N-terminal 63 residues, 1 to 63 (MEGTCFLRGQ…LSLRASGPIR (63 aa)), are a transit peptide targeting the chloroplast. N-acetylalanine is present on Ala64. 84 to 113 (VFVAGATGKVGSRTVRELLKLGFRVRAGVR) lines the NADP(+) pocket. The disordered stretch occupies residues 328-641 (SKRPYVPPPK…SPLPSPVTNH (314 aa)). The segment covering 359–372 (APKEDEAPPKEKNV) has biased composition (basic and acidic residues). Tandem repeats lie at residues 376-397 (PLSPYASYEDLKPPTSPIPNST) and 444-465 (PLSPYARYENLKPPSSPSPTAS). The segment at 376 to 638 (PLSPYASYED…PPTSPLPSPV (263 aa)) is 4 X 22 AA approximate repeats. A compositionally biased stretch (low complexity) spans 393–402 (IPNSTTSVSP). Residues 435 to 444 (KQVEEKKERP) show a composition bias toward basic and acidic residues. A compositionally biased stretch (low complexity) spans 485–528 (SSTVAKTVTETAVATSVTETSVATSVPETAVATSVTETAAPATS). Copy 3 of the repeat occupies 532 to 553 (PLSPYAIYADLKPPTSPTPAST). Positions 599-612 (AIDTSLASGDNTAQ) are enriched in polar residues. The stretch at 617-638 (PLSPYTMYADMKPPTSPLPSPV) is repeat 4. Positions 630–641 (PTSPLPSPVTNH) are enriched in pro residues.

In terms of assembly, part of the Tic complex. Interacts with TIC110 and TIC55. Interacts with LFNR1 and LFNR2. Component of high molecular weight thylakoid LFNRs-containing protein complexes containing LIR1, LFNR1, LFNR2, TIC62 and TROL proteins. As to expression, expressed in cotyledons and leaves, but not in roots.

Its subcellular location is the plastid. The protein localises to the chloroplast inner membrane. It localises to the chloroplast stroma. It is found in the chloroplast thylakoid. Functionally, involved in protein precursor import into chloroplasts. Part of the redox regulon consisting of TIC32, TIC 55 and TIC62. Acts as a membrane anchor of LFNR1 and LFNR2. Has a NADPH-dependent dehydrogenase activity, but only after preincubation with lipids. In Arabidopsis thaliana (Mouse-ear cress), this protein is Protein TIC 62, chloroplastic.